Here is a 269-residue protein sequence, read N- to C-terminus: Tryptophan synthase alpha chain (269 aa).

Residues Glu49 and Asp60 each act as proton acceptor in the active site.

It belongs to the TrpA family. As to quaternary structure, tetramer of two alpha and two beta chains.

It carries out the reaction (1S,2R)-1-C-(indol-3-yl)glycerol 3-phosphate + L-serine = D-glyceraldehyde 3-phosphate + L-tryptophan + H2O. It participates in amino-acid biosynthesis; L-tryptophan biosynthesis; L-tryptophan from chorismate: step 5/5. In terms of biological role, the alpha subunit is responsible for the aldol cleavage of indoleglycerol phosphate to indole and glyceraldehyde 3-phosphate. This is Tryptophan synthase alpha chain from Azotobacter vinelandii (strain DJ / ATCC BAA-1303).